We begin with the raw amino-acid sequence, 518 residues long: Lysine 5,6-aminomutase alpha subunit (518 aa).

Pyridoxal 5'-phosphate-binding positions include 184–189, Ser-238, Tyr-263, Arg-268, and Asn-299; that span reads RTTGQS.

This sequence belongs to the KamD family. Heterotetramer of 2 alpha and 2 beta subunits. It depends on adenosylcob(III)alamin as a cofactor. The cofactor is pyridoxal 5'-phosphate.

It carries out the reaction (3S)-3,6-diaminohexanoate = (3S,5S)-3,5-diaminohexanoate. The catalysed reaction is D-lysine = (2R,5S)-2,5-diaminohexanoate. It functions in the pathway amino-acid degradation; L-lysine degradation via acetate pathway. Its function is as follows. Catalyzes the migration of the L-beta-lysine and D-lysine epsilon amino group to the delta carbon to produce 3,5-diaminohexanoate and 2,5-diaminohexanoate, respectively. This chain is Lysine 5,6-aminomutase alpha subunit, found in Fusobacterium nucleatum subsp. nucleatum (strain ATCC 25586 / DSM 15643 / BCRC 10681 / CIP 101130 / JCM 8532 / KCTC 2640 / LMG 13131 / VPI 4355).